The sequence spans 119 residues: Ribonuclease P protein component (119 aa).

The protein belongs to the RnpA family. Consists of a catalytic RNA component (M1 or rnpB) and a protein subunit.

The catalysed reaction is Endonucleolytic cleavage of RNA, removing 5'-extranucleotides from tRNA precursor.. Functionally, RNaseP catalyzes the removal of the 5'-leader sequence from pre-tRNA to produce the mature 5'-terminus. It can also cleave other RNA substrates such as 4.5S RNA. The protein component plays an auxiliary but essential role in vivo by binding to the 5'-leader sequence and broadening the substrate specificity of the ribozyme. In Streptococcus gordonii (strain Challis / ATCC 35105 / BCRC 15272 / CH1 / DL1 / V288), this protein is Ribonuclease P protein component.